A 248-amino-acid chain; its full sequence is UPF0736 protein BCG9842_B4111 (248 aa).

It belongs to the UPF0736 family.

The sequence is that of UPF0736 protein BCG9842_B4111 from Bacillus cereus (strain G9842).